A 419-amino-acid polypeptide reads, in one-letter code: Multifunctional CCA protein (419 aa).

ATP is bound by residues G8 and R11. The CTP site is built by G8 and R11. The Mg(2+) site is built by D21 and D23. Residues R91, R137, and R140 each coordinate ATP. The CTP site is built by R91, R137, and R140. Positions T226–W327 constitute an HD domain.

It belongs to the tRNA nucleotidyltransferase/poly(A) polymerase family. Bacterial CCA-adding enzyme type 1 subfamily. In terms of assembly, monomer. Can also form homodimers and oligomers. Requires Mg(2+) as cofactor. Ni(2+) serves as cofactor.

The enzyme catalyses a tRNA precursor + 2 CTP + ATP = a tRNA with a 3' CCA end + 3 diphosphate. The catalysed reaction is a tRNA with a 3' CCA end + 2 CTP + ATP = a tRNA with a 3' CCACCA end + 3 diphosphate. In terms of biological role, catalyzes the addition and repair of the essential 3'-terminal CCA sequence in tRNAs without using a nucleic acid template. Adds these three nucleotides in the order of C, C, and A to the tRNA nucleotide-73, using CTP and ATP as substrates and producing inorganic pyrophosphate. tRNA 3'-terminal CCA addition is required both for tRNA processing and repair. Also involved in tRNA surveillance by mediating tandem CCA addition to generate a CCACCA at the 3' terminus of unstable tRNAs. While stable tRNAs receive only 3'-terminal CCA, unstable tRNAs are marked with CCACCA and rapidly degraded. The chain is Multifunctional CCA protein from Leptothrix cholodnii (strain ATCC 51168 / LMG 8142 / SP-6) (Leptothrix discophora (strain SP-6)).